Reading from the N-terminus, the 335-residue chain is Methionine import ATP-binding protein MetN 1 (335 aa).

The ABC transporter domain occupies 2-242; sequence IEFHNVHKTY…PQHATTRRFV (241 aa). ATP is bound at residue 38 to 45; it reads GHSGAGKS.

Belongs to the ABC transporter superfamily. Methionine importer (TC 3.A.1.24) family. As to quaternary structure, the complex is composed of two ATP-binding proteins (MetN), two transmembrane proteins (MetI) and a solute-binding protein (MetQ).

The protein localises to the cell inner membrane. It catalyses the reaction L-methionine(out) + ATP + H2O = L-methionine(in) + ADP + phosphate + H(+). The catalysed reaction is D-methionine(out) + ATP + H2O = D-methionine(in) + ADP + phosphate + H(+). In terms of biological role, part of the ABC transporter complex MetNIQ involved in methionine import. Responsible for energy coupling to the transport system. The sequence is that of Methionine import ATP-binding protein MetN 1 from Pseudomonas syringae pv. syringae (strain B728a).